The sequence spans 231 residues: Lytic polysaccharide monooxygenase-like protein X325 (231 aa).

The first 17 residues, 1–17 (MRLSLLVTLALTALIEA), serve as a signal peptide directing secretion. His18 is a Cu(2+) binding site. N-linked (GlcNAc...) asparagine glycans are attached at residues Asn34, Asn55, Asn98, Asn133, Asn174, and Asn180. 2 disulfides stabilise this stretch: Cys47-Cys157 and Cys122-Cys178. Ile202 is lipidated: GPI-anchor amidated isoleucine. A propeptide spans 203 to 231 (ASTTTGSAPRYYSWAGWLPLVAGAIWMAL) (removed in mature form).

Belongs to the X325 family. Requires Cu(2+) as cofactor.

It localises to the cell membrane. Its function is as follows. Lytic polysaccharide monooxygenase-like protein that has diverged to biological functions other than polysaccharide degradation since it does not perform oxidative cleavage of polysaccharides. Acts as a cell surface-bound protein that functions in the copper-accumulation pathway. May also act as the major cell wall sensor that regulates MAP kinase-dependent hyphal anastomosis, the fusion of hyphal cells. In Hypocrea jecorina (strain QM6a) (Trichoderma reesei), this protein is Lytic polysaccharide monooxygenase-like protein X325.